The sequence spans 164 residues: Thiol peroxidase (164 aa).

The region spanning 17-162 (IKVGDTFPDF…YDEVLQAAQA (146 aa)) is the Thioredoxin domain. C58 acts as the Cysteine sulfenic acid (-SOH) intermediate in catalysis. A disulfide bond links C58 and C92.

The protein belongs to the peroxiredoxin family. Tpx subfamily. Homodimer.

It catalyses the reaction a hydroperoxide + [thioredoxin]-dithiol = an alcohol + [thioredoxin]-disulfide + H2O. Thiol-specific peroxidase that catalyzes the reduction of hydrogen peroxide and organic hydroperoxides to water and alcohols, respectively. Plays a role in cell protection against oxidative stress by detoxifying peroxides. This chain is Thiol peroxidase, found in Clostridium acetobutylicum (strain ATCC 824 / DSM 792 / JCM 1419 / IAM 19013 / LMG 5710 / NBRC 13948 / NRRL B-527 / VKM B-1787 / 2291 / W).